Here is a 62-residue protein sequence, read N- to C-terminus: Arabinogalactan protein 40 (62 aa).

An N-terminal signal peptide occupies residues 1 to 22 (MEMKNIFVALFISAVLVSSVSA). Pro28, Pro30, and Pro32 each carry 4-hydroxyproline. Residues Pro28, Pro30, and Pro32 are each glycosylated (O-linked (Ara...) hydroxyproline). The GPI-anchor amidated serine moiety is linked to residue Ser35. Positions 36 to 62 (SASTVAFPVVGSIVAASLSAFLALLLQ) are cleaved as a propeptide — removed in mature form.

Belongs to the AG-peptide AGP family. Post-translationally, contains 4-hydroxyproline; hydroxylated on Pro-28, Pro-30 and Pro-32. In terms of processing, O-glycosylated on hydroxyprolines; noncontiguous hydroxylproline residues are glycosylated with arabinogalactan.

Its subcellular location is the cell membrane. Functionally, proteoglycan that seems to be implicated in diverse developmental roles such as differentiation, cell-cell recognition, embryogenesis and programmed cell death. This is Arabinogalactan protein 40 from Arabidopsis thaliana (Mouse-ear cress).